The chain runs to 403 residues: S-adenosylmethionine synthase (403 aa).

His-17 contacts ATP. Mg(2+) is bound at residue Asp-19. Glu-45 contacts K(+). Residues Glu-58 and Gln-104 each coordinate L-methionine. Residues 104–114 (QSPDIAQGVDT) form a flexible loop region. Residues 179–181 (DGK), 250–251 (KF), Asp-259, 265–266 (RK), Ala-282, and Lys-286 each bind ATP. Asp-259 contributes to the L-methionine binding site. Lys-290 lines the L-methionine pocket.

It belongs to the AdoMet synthase family. In terms of assembly, homotetramer; dimer of dimers. Mg(2+) is required as a cofactor. K(+) serves as cofactor.

It is found in the cytoplasm. The enzyme catalyses L-methionine + ATP + H2O = S-adenosyl-L-methionine + phosphate + diphosphate. It functions in the pathway amino-acid biosynthesis; S-adenosyl-L-methionine biosynthesis; S-adenosyl-L-methionine from L-methionine: step 1/1. Functionally, catalyzes the formation of S-adenosylmethionine (AdoMet) from methionine and ATP. The overall synthetic reaction is composed of two sequential steps, AdoMet formation and the subsequent tripolyphosphate hydrolysis which occurs prior to release of AdoMet from the enzyme. This is S-adenosylmethionine synthase from Mycobacterium tuberculosis (strain ATCC 25177 / H37Ra).